We begin with the raw amino-acid sequence, 168 residues long: Plastocyanin, chloroplastic (168 aa).

Residues 1–69 constitute a chloroplast transit peptide; it reads MATVTSTTVA…SAVLASNALA (69 aa). Residues 70-168 enclose the Plastocyanin-like domain; sequence VEVLLGASDG…AGMVGQVTVN (99 aa). His-106, Cys-153, His-156, and Met-161 together coordinate Cu cation.

Belongs to the plastocyanin family. It depends on Cu(2+) as a cofactor.

It is found in the plastid. The protein resides in the chloroplast thylakoid membrane. Its function is as follows. Participates in electron transfer between P700 and the cytochrome b6-f complex in photosystem I. The sequence is that of Plastocyanin, chloroplastic (PETE) from Pisum sativum (Garden pea).